Consider the following 303-residue polypeptide: MEQAQSLFREGVLSHLEQLEALSYNLAVKQEKQRQEWAALRKNQELVLELRKKRDELKAKIERHKAEIQAFRGREEAGEDHGSAAGTSQQAMLELCVEELKGMLEMHWLTGISGKRTKKGVCVCISTAFEGAYLDSFHLDIALKPSVGISRHSVPPFIPLEQIAKEHLQTDLKKFLSVLFEHLNAYAGRKYQFQQLQSFPGGFVRDAQQGNSLHTVLTFGYNVRVEKQPFCLRAKLLYGGVTRSLPTEAVITCEDNRPSVQEKISSHSSLFCQNPLHRALECISSEDETLNHSSASLLGTHMF.

A coiled-coil region spans residues 38–77; it reads AALRKNQELVLELRKKRDELKAKIERHKAEIQAFRGREEA.

This sequence belongs to the CENP-O/MCM21 family.

The protein localises to the nucleus. Its subcellular location is the chromosome. It localises to the centromere. Its function is as follows. Probable component of a centromeric complex involved in assembly of kinetochore proteins, mitotic progression and chromosome segregation. The chain is Centromere protein O (cenpo) from Xenopus tropicalis (Western clawed frog).